The primary structure comprises 261 residues: Anamorsin homolog (261 aa).

The segment at 4–134 is N-terminal SAM-like domain; that stretch reads VQENNQVLYI…EIGSAAKLSL (131 aa). Positions 134–173 are linker; it reads LGGGANKAKVAAVWKLDVDDDGEAEERIDEDELLDEEDKV. Cysteine 183, cysteine 192, cysteine 195, and cysteine 197 together coordinate [2Fe-2S] cluster. Residues 183–197 form a fe-S binding site A region; that stretch reads CGTTGKRKACKDCSC. Positions 222, 225, 233, and 236 each coordinate [4Fe-4S] cluster. Short sequence motifs (cx2C motif) lie at residues 222–225 and 233–236; these read CGSC and CATC. Residues 222 to 236 are fe-S binding site B; that stretch reads CGSCYLGDAFRCATC.

Belongs to the anamorsin family. Monomer. [2Fe-2S] cluster is required as a cofactor. It depends on [4Fe-4S] cluster as a cofactor.

Its subcellular location is the cytoplasm. The protein resides in the mitochondrion intermembrane space. In terms of biological role, component of the cytosolic iron-sulfur (Fe-S) protein assembly (CIA) machinery. Required for the maturation of extramitochondrial Fe-S proteins. Part of an electron transfer chain functioning in an early step of cytosolic Fe-S biogenesis, facilitating the de novo assembly of a [4Fe-4S] cluster on the cytosolic Fe-S scaffold complex. Electrons are transferred from NADPH via a FAD- and FMN-containing diflavin oxidoreductase. Together with the diflavin oxidoreductase, also required for the assembly of the diferric tyrosyl radical cofactor of ribonucleotide reductase (RNR), probably by providing electrons for reduction during radical cofactor maturation in the catalytic small subunit. This chain is Anamorsin homolog, found in Culex quinquefasciatus (Southern house mosquito).